We begin with the raw amino-acid sequence, 953 residues long: Isoleucine--tRNA ligase (953 aa).

The 'HIGH' region signature appears at 58 to 68 (PYANGFIHLGH). Position 573 (E573) interacts with L-isoleucyl-5'-AMP. The 'KMSKS' region signature appears at 614–618 (KMSKS). K617 contributes to the ATP binding site. Residues C916, C919, C936, and C939 each contribute to the Zn(2+) site.

The protein belongs to the class-I aminoacyl-tRNA synthetase family. IleS type 1 subfamily. Monomer. It depends on Zn(2+) as a cofactor.

The protein localises to the cytoplasm. The catalysed reaction is tRNA(Ile) + L-isoleucine + ATP = L-isoleucyl-tRNA(Ile) + AMP + diphosphate. Its function is as follows. Catalyzes the attachment of isoleucine to tRNA(Ile). As IleRS can inadvertently accommodate and process structurally similar amino acids such as valine, to avoid such errors it has two additional distinct tRNA(Ile)-dependent editing activities. One activity is designated as 'pretransfer' editing and involves the hydrolysis of activated Val-AMP. The other activity is designated 'posttransfer' editing and involves deacylation of mischarged Val-tRNA(Ile). The polypeptide is Isoleucine--tRNA ligase (Blochmanniella floridana).